Consider the following 585-residue polypeptide: Mitochondrial sodium/calcium exchanger protein (585 aa).

A signal peptide spans 1 to 26 (MAGRWLDPLWAPGFLCVALILETASG). At 27–95 (AGDLSTKAHG…GIFCYFPPNL (69 aa)) the chain is on the extracellular side. A glycan (N-linked (GlcNAc...) asparagine) is linked at N46. A helical membrane pass occupies residues 96–116 (LPLAITLYVFWLLYLFLILGV). At 117 to 140 (TAAKFFCPNLSAISTSLKLSHNVA) the chain is on the cytoplasmic side. The helical transmembrane segment at 141-161 (GVTFLAFGNGAPDIFSALVAF) threads the bilayer. Residues 162 to 168 (SDPRTAG) lie on the Extracellular side of the membrane. The helical transmembrane segment at 169–189 (LAIGALFGAGVLVTTVVAGGI) threads the bilayer. Over 190–205 (TILRPFMAASRPFLRD) the chain is Cytoplasmic. A helical membrane pass occupies residues 206-226 (ITFYMVAVFLTFTALYLGRIT). L227 is a topological domain (extracellular). A helical membrane pass occupies residues 228 to 247 (VWALGYLGLYVFYVVTVIIC). Residues 248–325 (TWVYQRQRSR…KWRTQSISCK (78 aa)) lie on the Cytoplasmic side of the membrane. The residue at position 258 (S258) is a Phosphoserine; by PKA. Residues 326-346 (LLKVAKLPVEFLLLLTVPVVD) form a helical membrane-spanning segment. The Extracellular portion of the chain corresponds to 347–360 (PDKDDRNWKRPLNC). A helical membrane pass occupies residues 361–381 (LQLVISPLVLVLTLQSGVYGI). The Cytoplasmic segment spans residues 382–383 (YE). The helical transmembrane segment at 384–404 (IGGLLPVWAVVVIVGTALASV) threads the bilayer. The Extracellular portion of the chain corresponds to 405–416 (TFFATSNSEPPR). The helical transmembrane segment at 417–437 (LHWLFAFLGFLTSALWINAAA) threads the bilayer. Topologically, residues 438-445 (TEVVNILR) are cytoplasmic. The chain crosses the membrane as a helical span at residues 446 to 466 (SLGVVFRLSNTVLGLTLLAWG). The Extracellular portion of the chain corresponds to 467–491 (NSIGDAFSDFTLARQGYPRMAFSAC). A helical transmembrane segment spans residues 492-512 (FGGIIFNILVGVGLGCLLQIV). The Cytoplasmic portion of the chain corresponds to 513 to 525 (RSHASEVKLEPDG). The helical transmembrane segment at 526–546 (LLVWVLASALGLSLVFSLVSV) threads the bilayer. At 547–559 (PLQCFQLSKAYGL) the chain is on the extracellular side. The chain crosses the membrane as a helical span at residues 560-580 (CLLLFYICFIVVVLLTEFGVI). Topologically, residues 581–585 (HLKAD) are cytoplasmic.

This sequence belongs to the Ca(2+):cation antiporter (CaCA) (TC 2.A.19) family. SLC24A subfamily. Phosphorylation at Ser-258 by PKA prevents calcium overload. In terms of tissue distribution, widely expressed. Present at higher level in pancreas, stomach, skeletal muscle and skin (at protein level). Ubiquitously expressed.

It localises to the mitochondrion inner membrane. The enzyme catalyses Ca(2+)(in) + 3 Na(+)(out) = Ca(2+)(out) + 3 Na(+)(in). It carries out the reaction 3 Li(+)(out) + Ca(2+)(in) = 3 Li(+)(in) + Ca(2+)(out). Inhibited by the sodium/calcium exchanger inhibitor CGP-37157. Strongly inhibited by zinc. Mitochondrial sodium/calcium antiporter that mediates sodium-dependent calcium efflux from mitochondrion, by mediating the exchange of 3 sodium ions per 1 calcium ion. Plays a central role in mitochondrial calcium homeostasis by mediating mitochondrial calcium extrusion: calcium efflux is essential for mitochondrial function and cell survival, notably in cardiomyocytes. Regulates rates of glucose-dependent insulin secretion in pancreatic beta-cells during the first phase of insulin secretion: acts by mediating efflux of calcium from mitochondrion, thereby affecting cytoplasmic calcium responses. Required for store-operated Ca(2+) entry (SOCE) and Ca(2+) release-activated Ca(2+) (CRAC) channel regulation: sodium transport by SLC8B1 leads to promote calcium-shuttling that modulates mitochondrial redox status, thereby regulating SOCE activity. Involved in B-lymphocyte chemotaxis. Able to transport Ca(2+) in exchange of either Li(+) or Na(+), explaining how Li(+) catalyzes Ca(2+) exchange. In contrast to other members of the family its function is independent of K(+). This is Mitochondrial sodium/calcium exchanger protein from Rattus norvegicus (Rat).